Here is a 557-residue protein sequence, read N- to C-terminus: Tight junction-associated protein 1 (557 aa).

Residues 1–37 (MTSAAPAKKPYRKAPPEHRELRLEIPGSRLEQEEPLT) form a disordered region. Threonine 2 is modified (N-acetylthreonine). Basic and acidic residues predominate over residues 14–23 (APPEHRELRL). Positions 42–171 (MKLLQEENEE…EELNERYRLD (130 aa)) form a coiled coil. Disordered stretches follow at residues 266 to 303 (MSEG…SPEE) and 309 to 328 (AFEK…LYPG). Positions 274–286 (PASPPAPGSPTPQ) are enriched in pro residues. Position 300 is a phosphoserine (serine 300). Positions 316–325 (YPTPSPPHPL) are enriched in pro residues. Threonine 318 is subject to Phosphothreonine. Phosphoserine is present on residues serine 320 and serine 345. The disordered stretch occupies residues 364–409 (EEGSERARPSPVPSTPASAQASPHHQPSPAPLTLSAPASSASSEED). Polar residues predominate over residues 378-388 (TPASAQASPHH). A compositionally biased stretch (low complexity) spans 394 to 405 (PLTLSAPASSAS). At threonine 422 the chain carries Phosphothreonine. The span at 439 to 456 (LPELQRHFAHSPADRDEV) shows a compositional bias: basic and acidic residues. The interval 439 to 557 (LPELQRHFAH…QAQEQGNLLN (119 aa)) is disordered. Phosphoserine is present on serine 491. The segment covering 530–542 (RSPKRMGVHHLHR) has biased composition (basic residues). A Phosphoserine modification is found at serine 545. Over residues 546-557 (LTQAQEQGNLLN) the composition is skewed to polar residues.

As to quaternary structure, interacts with DLG1. Interacts with ARF6 (GTP-bound form). As to expression, ubiquitously expressed.

It localises to the golgi apparatus. Its subcellular location is the trans-Golgi network. It is found in the cell junction. The protein localises to the tight junction. The protein resides in the cell membrane. Functionally, plays a role in regulating the structure of the Golgi apparatus. The chain is Tight junction-associated protein 1 from Homo sapiens (Human).